The chain runs to 65 residues: Diapause-specific peptide (65 aa).

The N-terminal stretch at 1 to 24 (MGAALKMTIFLLIVACAMIATTEA) is a signal peptide. 3 cysteine pairs are disulfide-bonded: Cys-31–Cys-45, Cys-35–Cys-57, and Cys-46–Cys-64.

As to expression, highly expressed in the fat body.

The protein localises to the secreted. In terms of biological role, has antifungal activity against T.rubrum. Blocks voltage-dependent N-type calcium channels (Cav2.2 / CACNA1B). This chain is Diapause-specific peptide, found in Gastrophysa atrocyanea (Leaf beetle).